Consider the following 245-residue polypeptide: DnaJ homolog subfamily B member 6-B (245 aa).

Residues E3 to G69 form the J domain.

As to quaternary structure, homooligomer.

It localises to the cytoplasm. The protein localises to the perinuclear region. The protein resides in the nucleus. Functionally, has a stimulatory effect on the ATPase activity of HSP70 in a dose-dependent and time-dependent manner and hence acts as a co-chaperone of HSP70. Plays an indispensable role in the organization of KRT8/KRT18 filaments. Acts as an endogenous molecular chaperone for neuronal proteins including huntingtin. Suppresses aggregation and toxicity of polyglutamine-containing, aggregation-prone proteins. Also reduces cellular toxicity and caspase-3 activity. The chain is DnaJ homolog subfamily B member 6-B (dnajb6-b) from Xenopus laevis (African clawed frog).